The following is a 121-amino-acid chain: Putative iron-sulfur cluster insertion protein ErpA (121 aa).

Iron-sulfur cluster is bound by residues Cys49, Cys113, and Cys115.

It belongs to the HesB/IscA family. Homodimer. Iron-sulfur cluster serves as cofactor.

Its function is as follows. Required for insertion of 4Fe-4S clusters. In Paraburkholderia phymatum (strain DSM 17167 / CIP 108236 / LMG 21445 / STM815) (Burkholderia phymatum), this protein is Putative iron-sulfur cluster insertion protein ErpA.